The following is an 85-amino-acid chain: METVVGLTAIAVALLIGLGALGTAIGFGLLGGKFLEGAARQPEMVPMLQVKMFIVAGLLDAVTMIGVGIALFFTFANPFVGQIAG.

Transmembrane regions (helical) follow at residues 10-30 (IAVA…FGLL) and 53-73 (FIVA…ALFF).

The protein belongs to the ATPase C chain family. In terms of assembly, F-type ATPases have 2 components, F(1) - the catalytic core - and F(0) - the membrane proton channel. F(1) has five subunits: alpha(3), beta(3), gamma(1), delta(1), epsilon(1). F(0) has three main subunits: a(1), b(2) and c(10-14). The alpha and beta chains form an alternating ring which encloses part of the gamma chain. F(1) is attached to F(0) by a central stalk formed by the gamma and epsilon chains, while a peripheral stalk is formed by the delta and b chains.

It localises to the cell inner membrane. F(1)F(0) ATP synthase produces ATP from ADP in the presence of a proton or sodium gradient. F-type ATPases consist of two structural domains, F(1) containing the extramembraneous catalytic core and F(0) containing the membrane proton channel, linked together by a central stalk and a peripheral stalk. During catalysis, ATP synthesis in the catalytic domain of F(1) is coupled via a rotary mechanism of the central stalk subunits to proton translocation. In terms of biological role, key component of the F(0) channel; it plays a direct role in translocation across the membrane. A homomeric c-ring of between 10-14 subunits forms the central stalk rotor element with the F(1) delta and epsilon subunits. In Pseudomonas aeruginosa (strain LESB58), this protein is ATP synthase subunit c.